Reading from the N-terminus, the 137-residue chain is Small ribosomal subunit protein uS12 (137 aa).

The segment at Met-1–Arg-44 is disordered. The residue at position 102 (Asp-102) is a 3-methylthioaspartic acid.

This sequence belongs to the universal ribosomal protein uS12 family. In terms of assembly, part of the 30S ribosomal subunit. Contacts proteins S8 and S17. May interact with IF1 in the 30S initiation complex.

With S4 and S5 plays an important role in translational accuracy. Functionally, interacts with and stabilizes bases of the 16S rRNA that are involved in tRNA selection in the A site and with the mRNA backbone. Located at the interface of the 30S and 50S subunits, it traverses the body of the 30S subunit contacting proteins on the other side and probably holding the rRNA structure together. The combined cluster of proteins S8, S12 and S17 appears to hold together the shoulder and platform of the 30S subunit. This Latilactobacillus sakei subsp. sakei (strain 23K) (Lactobacillus sakei subsp. sakei) protein is Small ribosomal subunit protein uS12.